An 87-amino-acid chain; its full sequence is Selenoprotein W (87 aa).

A cross-link (cysteinyl-selenocysteine (Cys-Sec); redox-active) is located at residues 10–13; it reads CGAU. Selenocysteine 13 is a non-standard amino acid (selenocysteine). Cysteine 37 is subject to S-glutathionyl cysteine.

Belongs to the SelWTH family. Selenoprotein W subfamily. As to quaternary structure, interacts with DPYSL2, PRDX1, YWHAB, YWHAG, HSP70 and HSP90.

It localises to the cytoplasm. Functionally, plays a role as a glutathione (GSH)-dependent antioxidant. May be involved in a redox-related process. May play a role in the myopathies of selenium deficiency. This Sus scrofa (Pig) protein is Selenoprotein W.